A 477-amino-acid polypeptide reads, in one-letter code: Monocarboxylate transporter 12-B (477 aa).

Over 1–9 (MAQEKKKGG) the chain is Cytoplasmic. 12 helical membrane-spanning segments follow: residues 10–30 (VLPP…VVTV), 58–78 (AWIH…GSLI), 86–106 (IAVI…SFAT), 116–136 (GLLT…MVGI), 148–168 (IAMS…QLLI), 178–198 (LILG…RPII), 253–273 (FLVL…PFVY), 289–309 (AFLM…FGWL), 320–340 (NICY…IPLL), 344–364 (VWLV…VALI), 383–403 (VVYF…GWLV), and 413–433 (FFLS…VAII). At 434 to 477 (RYCQRNQKKNSLSKIPKLVSCEGKQVDYYPPKNKDLMLIIPATS) the chain is on the cytoplasmic side.

This sequence belongs to the major facilitator superfamily. Monocarboxylate porter (TC 2.A.1.13) family.

The protein localises to the cell membrane. Its subcellular location is the basolateral cell membrane. It carries out the reaction creatine(in) = creatine(out). It catalyses the reaction guanidinoacetate(in) = guanidinoacetate(out). Its function is as follows. Functions as a transporter for creatine and as well for its precursor guanidinoacetate. Transport of creatine and GAA is independent of resting membrane potential and extracellular Na(+), Cl(-), or pH. Contributes to the process of creatine biosynthesis and distribution. This Danio rerio (Zebrafish) protein is Monocarboxylate transporter 12-B (slc16a12b).